The following is a 2005-amino-acid chain: MDPLNEGVVNVYLTDSYLKGVISFSETNAIGSCLLGKHYLKKDNTSKVAIESPVVEHIRLRNAFQTRIKEKNLRVVEPVNMQSEVMRNSYTCELNLLKQLITRSKDISSLKLDMICDWLQLKSTSENPSVLKFVDVRCIPDWVSTWFSSWYNLNKLILEFRREEVACTGSIICKTIGSIMFIISSFGCVIKSNKSKRISFMTYNQVLTWKDVMLSRFNANLCVWISNSLNKNQEGLGLRSNLQGALVNKLYEIVDSMLSVCSNEGFTLVKEFEGFIMSEILKITEHAQFSTRFRNTLLNGLVDQLAKMRGLNRKRVSGTVLEGNQYPMYETTLATLGGALKTIRLLVNKNLDNAAELYYIFRIFGHPMVEEREAMDAVRLNNEITKILKLESLTELRGAFILRIIKGFVDTNKRWPKIKNLKVLSRRWIMYFKAKSYPSQLELSSQDFLELAGVQFEQEFAIPERTNLEMVLNDKAISPPKNLIWSVFPKNYLPTNIRERFTEEMFNSSEKLKTRRVLEYYLKDNKFDQNDLKKYVVRQEYLGDKEHVVSLTGKERELSVGRMFAMQPGKQRQVQILAEKLLADNIVPFFPETLTKYGDLELQRIMEIKSELSSVKSRRNDSYNNYIARASIVTDLSKFNQAFRYETSSVCADVVDELHGTQSLFCWLHLTVPLTTMICTYRHAPPETEGVYDIDKIKEQSGLYRFHMGGIEGWCQKLWTMEAVSLLDVVSVKNRVQLTSLLNGDNQSIDVSKPVRLSQGVDEVKADYSLAVKMLKEIRNAYKDIGHKLKEGETYISRDLQFMSKVIQSEGVMHPSPIKKILRVGPWINTILDDIKTSAESIGSLCQELEFRGESLLVSLILRNFWLYELWMHESKSHPLAGKQLYRQLSKTLAITQKFFGITKETDVVNLWMNVPMQFGGGDPVVLYRSFYRRTPDFLTEAVSHMSVLLKVYGKAKEGSKKDFFKALLSVDKNKRATLTTLMRDPQAVGSERQARVTSEINRAAVTSVLSLSPNQLFCDSAIHYSRNEEEVGLIAQNITPVYPHGLRVLYESLPFHKAEKVVNMISGTKSITNLLQRTSAINGEDIDRAVSMMLENLGLLSRILSVCQDDITLPTKANGDLICCQVSRTLRERSWDNMEIVGVTSPSIVTCMNIVYSSSSQLKGITIEKFSTDKTTRGQRGPKSPWVGSSTQEKKLVPVYNRQILSKQQKEQLEAIGKLRWVYKGTQGLRRLLDKICIGSLGISYKNVKPLLPRFMSVNFLHRLSVSSRPMEFPASVPAYRTTNYHFDTSPVNQTLSERFGNEDINLVFQNAISCGISVMSVVEQLTGRSPKQLVMIPQLEEIDIMPPPVFLGKFDYKLVEKISSDQHIFSPDKLDLVTLGKMLMPSTSGAKSDQFWNRKENFFHGNNLVESLSAALACHWCGILTEQCNENNIFRREWGDGFVTDHAFIDFKTFVGVFKTKLLCGWGSRGGDIKDRDMIDESIDKLIRVDNSFWRMFSKVILEPKVRKRVMLFDVKILSLVGYAGFKNWFIDHLRSSDLCEVPWVVNADSEIVEVSAVKIYLQLLRVSSPLRITVLNYSDMAHAITRLIRRKSMHDNVPSISRTLSPAELAPVVEPTVQMNLFPKITFERLKNYETVSGSTRGKLTRNYMVMLPWQHINRFNFVFSSTGCKISVKACIGRLIQDLNPTVFYFVGEGAGNWMARTACEYPNAKFVYRSLKDDLDHHFPLEFQRVLGNMNRVIDGGEGLSMDTTDATQKTHWDLIHRICKDALLITLCDAEFKDRDDFFKMVTLWRKHVLSCRICTTYGTDLYLFAKYHAKEQSIKLPYFVRSIATYVMQGSKLSGSECYVLLTLGHHNNLPCHGEVQSSKLKLAVCNDFSIPRKVEVKAVEANCKSLLSGLRTPINRAELDRQKKMLTLRSYHSSVATVGGSRVIESKWLSKKATTIIEWLEHILNSPKGELNYDFFEALENTYPNMVKLLDNLGSAELKKLIKVTGYMLMSKK.

The region spanning 628–811 is the RdRp catalytic domain; the sequence is ARASIVTDLS…FMSKVIQSEG (184 aa). Mg(2+) contacts are provided by D635 and D745. Residues 902 to 1379 are GDP polyribonucleotidyltransferase; the sequence is ITKETDVVNL…IFSPDKLDLV (478 aa). The active-site Nucleophile; for GDP polyribonucleotidyltransferase activity is the H1263. In terms of domain architecture, Mononegavirus-type SAM-dependent 2'-O-MTase spans 1662 to 1857; sequence RFNFVFSSTG…ECYVLLTLGH (196 aa). Catalysis depends on K1673, which acts as the For mRNA (nucleoside-2'-O-)-methyltransferase activity. Residue 1696–1700 participates in substrate binding; sequence GEGAG. Catalysis depends on for mRNA (nucleoside-2'-O-)-methyltransferase activity residues D1779, K1817, and E1848.

This sequence belongs to the paramyxovirus L protein family. In terms of assembly, interacts with the phosphoprotein (via C-terminus); the association of P and L forms the polymerase complex. Mg(2+) serves as cofactor.

The protein localises to the virion. It localises to the host cytoplasm. It catalyses the reaction RNA(n) + a ribonucleoside 5'-triphosphate = RNA(n+1) + diphosphate. The enzyme catalyses GTP + H2O = GDP + phosphate + H(+). It carries out the reaction a 5'-end triphospho-adenylyl-adenylyl-cytidylyl-adenosine in mRNA + GDP + H(+) = a 5'-end (5'-triphosphoguanosine)-adenylyl-adenylyl-cytidylyl-adenosine in mRNA + diphosphate. The catalysed reaction is a 5'-end (5'-triphosphoguanosine)-adenylyl-adenylyl-cytidylyl-adenosine in mRNA + 2 S-adenosyl-L-methionine = a 5'-end (N(7)-methyl 5'-triphosphoguanosine)-(2'-O-methyladenylyl)-adenylyl-cytidylyl-adenosine in mRNA + 2 S-adenosyl-L-homocysteine + H(+). It catalyses the reaction a 5'-end (5'-triphosphoguanosine)-adenylyl-adenylyl-cytidylyl-adenosine in mRNA + S-adenosyl-L-methionine = a 5'-end (5'-triphosphoguanosine)-(2'-O-methyladenylyl)-adenylyl-cytidylyl-adenosine in mRNA + S-adenosyl-L-homocysteine + H(+). The enzyme catalyses a 5'-end (5'-triphosphoguanosine)-(2'-O-methyladenylyl)-adenylyl-cytidylyl-adenosine in mRNA + S-adenosyl-L-methionine = a 5'-end (N(7)-methyl 5'-triphosphoguanosine)-(2'-O-methyladenylyl)-adenylyl-cytidylyl-adenosine in mRNA + S-adenosyl-L-homocysteine. Its function is as follows. Responsible for RNA synthesis (replicase and transcriptase), cap addition, and cap methylation. Also performs the polyadenylation of subgenomic mRNAs by a stuttering mechanism at a slipery stop site present at the end of viral genes. The template is composed of the viral RNA tightly encapsidated by the nucleoprotein (N). The viral polymerase binds to the genomic RNA at two different sites in the 3' leader promoter thereby initiating either genome replication or mRNA transcription. In the transcription mode, the polymerase performs the sequential transcription of all mRNAs using a termination-reinitiation mechanism responding to gene start and gene end signals. Some polymerase disengage from the template at each gene junction, resulting in a decreasing abundance of transcripts from the 3' to the 5' end of the genome. The first gene is the most transcribed, and the last the least transcribed. Needs as cofactors the phosphoprotein for processivity and the M2-1 anti-termination protein. Polyribonucleotidyl transferase (PRNTase) adds the cap structure when the nascent RNA chain length has reached few nucleotides. Ribose 2'-O methylation of viral mRNA cap precedes and facilitates subsequent guanine-N-7 methylation. In the replication mode, the polymerase replicates the whole viral genome without recognizing the gene end transcriptional signals. The ability of the polymerase to override the gene end signals as it is producing the antigenome is probably due to replicative RNA becoming encapsidated with nucleoprotein as it is synthesized. In Avian metapneumovirus (isolate Canada goose/Minnesota/15a/2001) (AMPV), this protein is RNA-directed RNA polymerase L (L).